The following is a 248-amino-acid chain: Myelin protein P0 (248 aa).

The first 29 residues, 1-29 (MAPGAPSSSPSPILAALLFSSLVLSPAQA), serve as a signal peptide directing secretion. An Ig-like V-type domain is found at 30–143 (IVVYTDKEVY…DIVGKTSQVT (114 aa)). The Extracellular portion of the chain corresponds to 30–153 (IVVYTDKEVY…LYVFEKVPTR (124 aa)). Cysteine 50 and cysteine 127 form a disulfide bridge. An N-linked (GlcNAc...) (complex) asparagine glycan is attached at asparagine 122. Residues 154 to 179 (YGVVLGAVIGGVLGVVLLVLLLFYVV) traverse the membrane as a helical segment. Topologically, residues 180 to 248 (RYCWLRRQAA…GLGESRKDKK (69 aa)) are cytoplasmic. Serine 210 carries the phosphoserine; by PKC modification. A disordered region spans residues 222 to 248 (MLDHSRSTKAASEKKAKGLGESRKDKK). A compositionally biased stretch (basic and acidic residues) spans 224 to 248 (DHSRSTKAASEKKAKGLGESRKDKK). 2 positions are modified to phosphoserine: serine 226 and serine 228. A phosphoserine; by PKC mark is found at serine 233 and serine 243.

Belongs to the myelin P0 protein family. Homodimer and homotetramer. Post-translationally, N-glycosylated; contains sulfate-substituted glycan.

It is found in the cell membrane. Its function is as follows. Is an adhesion molecule necessary for normal myelination in the peripheral nervous system. It mediates adhesion between adjacent myelin wraps and ultimately drives myelin compaction. In Equus caballus (Horse), this protein is Myelin protein P0 (MPZ).